Consider the following 220-residue polypeptide: Metalloproteinase inhibitor 2 (220 aa).

The signal sequence occupies residues 1–26 (MGAAARSLRLALGLLLLATLLRPADA). Cys-27 lines the Zn(2+) pocket. 2 involved in metalloproteinase-binding regions span residues 27–30 (CSCS) and 95–96 (SA). Cystine bridges form between Cys-27–Cys-98, Cys-29–Cys-127, Cys-39–Cys-152, Cys-154–Cys-201, Cys-159–Cys-164, and Cys-172–Cys-193. Residues 27–152 (CSCSPVHPQQ…SLNHRYQMGC (126 aa)) form the NTR domain.

It belongs to the protease inhibitor I35 (TIMP) family. As to quaternary structure, interacts (via the C-terminal) with MMP2 (via the C-terminal PEX domain); the interaction inhibits the MMP2 activity. The activity of TIMP2 is dependent on the presence of disulfide bonds.

The protein localises to the secreted. Complexes with metalloproteinases (such as collagenases) and irreversibly inactivates them by binding to their catalytic zinc cofactor. In Rattus norvegicus (Rat), this protein is Metalloproteinase inhibitor 2 (Timp2).